Reading from the N-terminus, the 361-residue chain is PTI1-like tyrosine-protein kinase At3g15890 (361 aa).

The Protein kinase domain occupies 39–328 (FNYDNKLGEG…ISELEANPLF (290 aa)). ATP-binding positions include 45–53 (LGEGRFGSV) and K67. The active-site Proton acceptor is the D165. Disordered stretches follow at residues 195-219 (TGDG…SGKE) and 323-361 (EANP…QQQE). The segment covering 351-361 (LEDKDHQQQQE) has biased composition (basic and acidic residues).

It belongs to the protein kinase superfamily. Tyr protein kinase family.

The enzyme catalyses L-tyrosyl-[protein] + ATP = O-phospho-L-tyrosyl-[protein] + ADP + H(+). The chain is PTI1-like tyrosine-protein kinase At3g15890 from Arabidopsis thaliana (Mouse-ear cress).